A 32-amino-acid chain; its full sequence is Calcitonin (32 aa).

Cysteines 1 and 7 form a disulfide. Pro32 bears the Proline amide mark.

This sequence belongs to the calcitonin family.

It is found in the secreted. Causes a rapid but short-lived drop in the level of calcium and phosphate in blood by promoting the incorporation of those ions in the bones. This Anguilla japonica (Japanese eel) protein is Calcitonin.